Consider the following 227-residue polypeptide: PKHD-type hydroxylase Bphy_5374 (227 aa).

Residues 79-179 (KVYPPLFNRY…RVASFFWVQS (101 aa)) enclose the Fe2OG dioxygenase domain. Fe cation contacts are provided by His-97, Asp-99, and His-160. 2-oxoglutarate is bound at residue Arg-170.

Fe(2+) is required as a cofactor. It depends on L-ascorbate as a cofactor.

The protein is PKHD-type hydroxylase Bphy_5374 of Paraburkholderia phymatum (strain DSM 17167 / CIP 108236 / LMG 21445 / STM815) (Burkholderia phymatum).